An 83-amino-acid chain; its full sequence is Tetracenomycin polyketide synthase acyl carrier protein (83 aa).

In terms of domain architecture, Carrier spans 3–83 (QIGLPRLVEI…VNTETAGEVA (81 aa)). The residue at position 41 (S41) is an O-(pantetheine 4'-phosphoryl)serine.

In terms of assembly, the tetracenomycin polyketide synthase (TCM PKS) is composed of a ketosynthase complex (TcmKL), an acyl carrier protein (TcmM), a cyclase (TcmN) and a probable second cyclase (TcmJ). It depends on pantetheine 4'-phosphate as a cofactor. In terms of processing, 4'-phosphopantetheine is transferred from CoA to a specific serine of apo-ACP.

The enzyme catalyses 10 malonyl-CoA + 8 H(+) = tetracenomycin F2 + 10 CO2 + 10 CoA + 2 H2O. It participates in antibiotic biosynthesis; tetracenomycin C biosynthesis. Involved in the biosynthesis of tetracenomycin C (TCM C). Part of a type II polyketide synthase (PKS) that catalyzes the synthesis of tetracenomycin F2 (TCM F2), a precursor of TCM C, from malonyl-CoA. TcmM is an acyl carrier protein that serves as an acceptor of malonate from malonyl-CoA and acts as the tether for the substrates and intermediates of polyketide assembly. The malonyl CoA-acyl carrier protein transacylase FabD (MCT) is required to catalyze the transacylation between malonyl-CoA and TcmM, although a relatively slow spontaneous self-malonylation of TcmM also occurs in a reaction without the MCT. The sequence is that of Tetracenomycin polyketide synthase acyl carrier protein from Streptomyces glaucescens.